The primary structure comprises 137 residues: MNNMSLSDIFERFDTSKDGKISWEEFRDAIHALSPSIPSEKLVEMFIQLDTNGDGQVDAAKFASCMDQTAQSSGGDVEKELKDAFKLYDINCDGKISANELHVVMTRLGEKCTVESCVGMVQAIDVDGDGYIRFVGV.

EF-hand domains lie at 1 to 36 (MNNM…LSPS), 37 to 72 (IPSE…TAQS), 76 to 111 (DVEK…LGEK), and 112 to 137 (CTVE…FVGV). Positions 14, 16, 18, 20, and 25 each coordinate Ca(2+). Ca(2+) contacts are provided by aspartate 89, asparagine 91, aspartate 93, lysine 95, and glutamate 100.

In terms of biological role, potential calcium sensor. The sequence is that of Probable calcium-binding protein CML33 (CML33) from Arabidopsis thaliana (Mouse-ear cress).